Consider the following 754-residue polypeptide: 1,4-alpha-glucan branching enzyme GlgB (754 aa).

Aspartate 431 acts as the Nucleophile in catalysis. Residue glutamate 484 is the Proton donor of the active site.

It belongs to the glycosyl hydrolase 13 family. GlgB subfamily. Monomer.

It catalyses the reaction Transfers a segment of a (1-&gt;4)-alpha-D-glucan chain to a primary hydroxy group in a similar glucan chain.. It participates in glycan biosynthesis; glycogen biosynthesis. Its function is as follows. Catalyzes the formation of the alpha-1,6-glucosidic linkages in glycogen by scission of a 1,4-alpha-linked oligosaccharide from growing alpha-1,4-glucan chains and the subsequent attachment of the oligosaccharide to the alpha-1,6 position. The sequence is that of 1,4-alpha-glucan branching enzyme GlgB from Prochlorococcus marinus (strain MIT 9215).